Here is a 263-residue protein sequence, read N- to C-terminus: Dihydropteroate synthase type-3 (263 aa).

One can recognise a Pterin-binding domain in the interval 2–257; sequence SKIFGIVNIT…DVKSLSDALK (256 aa). Residue Asn-9 participates in Mg(2+) binding. Ser-49 serves as a coordination point for 4-aminobenzoate. Positions 82, 101, and 172 each coordinate (7,8-dihydropterin-6-yl)methyl diphosphate. Positions 101 and 172 each coordinate 6-hydroxymethyl-7,8-dihydropterin. Phe-177 provides a ligand contact to 4-aminobenzoate. Lys-211 lines the (7,8-dihydropterin-6-yl)methyl diphosphate pocket. Lys-211 lines the 6-hydroxymethyl-7,8-dihydropterin pocket. Ser-212 lines the 4-aminobenzoate pocket. 245–247 is a (7,8-dihydropterin-6-yl)methyl diphosphate binding site; sequence RTH.

It belongs to the DHPS family. Mg(2+) is required as a cofactor.

It catalyses the reaction (7,8-dihydropterin-6-yl)methyl diphosphate + 4-aminobenzoate = 7,8-dihydropteroate + diphosphate. It functions in the pathway cofactor biosynthesis; tetrahydrofolate biosynthesis; 7,8-dihydrofolate from 2-amino-4-hydroxy-6-hydroxymethyl-7,8-dihydropteridine diphosphate and 4-aminobenzoate: step 1/2. Its function is as follows. Catalyzes the condensation of para-aminobenzoate (pABA) with 6-hydroxymethyl-7,8-dihydropterin diphosphate (DHPt-PP) to form 7,8-dihydropteroate (H2Pte), the immediate precursor of folate derivatives. Confers resistance to sulfonamide antibiotics, including sulfamethoxazole (SMX), sulfadiazine and sulfisoxazole. This chain is Dihydropteroate synthase type-3, found in Escherichia coli.